The sequence spans 430 residues: Tyrosine--tRNA ligase (430 aa).

Residue Tyr-36 coordinates L-tyrosine. The 'HIGH' region motif lies at 41 to 50 (PTASSLHVGS). Residues Tyr-170 and Gln-174 each contribute to the L-tyrosine site. The 'KMSKS' region signature appears at 230–234 (KMGKT). ATP is bound at residue Lys-233. One can recognise an S4 RNA-binding domain in the interval 362–427 (VPAFELFDEI…GKKNYHRLVL (66 aa)).

It belongs to the class-I aminoacyl-tRNA synthetase family. TyrS type 1 subfamily. In terms of assembly, homodimer.

It is found in the cytoplasm. The enzyme catalyses tRNA(Tyr) + L-tyrosine + ATP = L-tyrosyl-tRNA(Tyr) + AMP + diphosphate + H(+). Functionally, catalyzes the attachment of tyrosine to tRNA(Tyr) in a two-step reaction: tyrosine is first activated by ATP to form Tyr-AMP and then transferred to the acceptor end of tRNA(Tyr). This Desulfatibacillum aliphaticivorans protein is Tyrosine--tRNA ligase.